The primary structure comprises 445 residues: Arabinooligosaccharide-binding protein (445 aa).

The first 20 residues, 1 to 20 (MGKNILFFSFVGVMVLVLVA), serve as a signal peptide directing secretion. A lipid anchor (N-palmitoyl cysteine) is attached at Cys21. Cys21 carries S-diacylglycerol cysteine lipidation.

The protein belongs to the bacterial solute-binding protein 1 family. In terms of assembly, the complex is composed of two ATP-binding proteins (MsmX), two transmembrane proteins (AraP and AraQ) and a solute-binding protein (AraN).

Its subcellular location is the cell membrane. Its function is as follows. Part of the ABC transporter complex AraNPQ involved in the uptake of arabinooligosaccharides. AraN captures the substrate and delivers it to the two transmembrane components. The protein is Arabinooligosaccharide-binding protein (araN) of Halalkalibacterium halodurans (strain ATCC BAA-125 / DSM 18197 / FERM 7344 / JCM 9153 / C-125) (Bacillus halodurans).